The following is a 276-amino-acid chain: Glutamate racemase (276 aa).

Substrate is bound by residues Asp9–Ser10 and Tyr41–Gly42. Cys72 (proton donor/acceptor) is an active-site residue. Asn73–Thr74 lines the substrate pocket. The active-site Proton donor/acceptor is the Cys183. Thr184 to His185 lines the substrate pocket.

It belongs to the aspartate/glutamate racemases family.

It carries out the reaction L-glutamate = D-glutamate. The protein operates within cell wall biogenesis; peptidoglycan biosynthesis. Functionally, provides the (R)-glutamate required for cell wall biosynthesis. This chain is Glutamate racemase, found in Shouchella clausii (strain KSM-K16) (Alkalihalobacillus clausii).